The primary structure comprises 74 residues: Conotoxin VnMEKL-0222 (74 aa).

The signal sequence occupies residues 1-19 (MEKLTILLLVAAVLMSTQA). The propeptide occupies 20–46 (LIQEKRPKEKIKFLSKRKSIPESWWEG). Intrachain disulfides connect Cys48–Cys62, Cys55–Cys66, and Cys61–Cys71.

It belongs to the conotoxin O2 superfamily. Expressed by the venom duct.

It is found in the secreted. This Conus ventricosus (Mediterranean cone) protein is Conotoxin VnMEKL-0222.